The chain runs to 156 residues: Ribonuclease 1B pancreatic (156 aa).

Residues 1 to 28 (MALDKSVIPLPLLVVVLLVLGWAQPSLG) form the signal peptide. Substrate-binding residues include Lys35 and Arg38. His40 serves as the catalytic Proton acceptor. 4 cysteine pairs are disulfide-bonded: Cys54–Cys112, Cys68–Cys123, Cys86–Cys138, and Cys93–Cys100. N-linked (GlcNAc...) asparagine glycosylation occurs at Asn62. Substrate is bound by residues 69–73 (KSVNT), Lys94, and Arg113. N-linked (GlcNAc...) asparagine glycosylation occurs at Asn116. Residue His147 is the Proton donor of the active site.

Belongs to the pancreatic ribonuclease family. Monomer.

The protein resides in the secreted. It carries out the reaction an [RNA] containing cytidine + H2O = an [RNA]-3'-cytidine-3'-phosphate + a 5'-hydroxy-ribonucleotide-3'-[RNA].. The enzyme catalyses an [RNA] containing uridine + H2O = an [RNA]-3'-uridine-3'-phosphate + a 5'-hydroxy-ribonucleotide-3'-[RNA].. In terms of biological role, endonuclease that catalyzes the cleavage of RNA on the 3' side of pyrimidine nucleotides. Compared to RNASE1 it has lost activity towards dsRNA. The protein is Ribonuclease 1B pancreatic (RNASE1B) of Pygathrix nemaeus (Red-shanked douc langur).